Consider the following 229-residue polypeptide: uncharacterized protein (229 aa).

Residues 2-69 (QRLAKLISNA…KSRLWIYYKP (68 aa)) enclose the S4 RNA-binding domain. Asp-102 serves as the catalytic Nucleophile.

The protein belongs to the pseudouridine synthase RsuA family.

It catalyses the reaction a uridine in RNA = a pseudouridine in RNA. This is an uncharacterized protein from Rickettsia bellii (strain RML369-C).